Here is a 537-residue protein sequence, read N- to C-terminus: Putative cysteine ligase BshC (537 aa).

Residues E415 to L439 adopt a coiled-coil conformation.

The protein belongs to the BshC family.

Involved in bacillithiol (BSH) biosynthesis. May catalyze the last step of the pathway, the addition of cysteine to glucosamine malate (GlcN-Mal) to generate BSH. The sequence is that of Putative cysteine ligase BshC from Staphylococcus epidermidis (strain ATCC 12228 / FDA PCI 1200).